Here is a 375-residue protein sequence, read N- to C-terminus: MEELQDVQLTEIKPLLTDKDPGQHFEDFDGQEHDIETALGVVHVTMSGNTRGNRPVLLTYHDIGLNHKSCFNSFFNFDDMHEITQHFAVCHIDAPGQQQGAPSFPTGYQYPTMDELAEMLTAVLTHLNLRSIIGIGVGAGAYVLSRFALNNPLLVEGLVLLNIDPCAKGWIDWAASKLSFWTTNVVEVVLGHLFGYEELQSSLDLVQTFRLHIAQDINQDNLELFVNSYNSRKDLEIERPVFGSSTPTNTTIKCPVLLVVGDNSPAVDAVVECNSRLDPTRTTLLKMADCGGLPQVVQPGKLAEAIKYFVQGMGYMPSASMTRLVRSRTHSASSSGSMEIPRSRSHTSNAQLKSSSNNSLSNQIQETPQTIELSC.

Residues 326–375 (RSRTHSASSSGSMEIPRSRSHTSNAQLKSSSNNSLSNQIQETPQTIELSC) are disordered. Residues 348–363 (SNAQLKSSSNNSLSNQ) are compositionally biased toward low complexity. Residues 364–375 (IQETPQTIELSC) show a composition bias toward polar residues.

Belongs to the NDRG family.

This chain is Protein NDRG3, found in Xenopus laevis (African clawed frog).